The following is a 600-amino-acid chain: NADH-ubiquinone oxidoreductase chain 5 (600 aa).

16 helical membrane-spanning segments follow: residues 1 to 21 (MYIL…LFGR), 27 to 47 (GAGI…LLIF), 81 to 101 (LTAV…IFST), 110 to 130 (VPRF…LVTS), 136 to 156 (LFIG…FWLT), 178 to 198 (FVLA…ASVF), 200 to 220 (IVAL…FIGA), 241 to 261 (TPVS…FLLI), 274 to 294 (LMVV…IGLV), 301 to 323 (VIAY…SQYS), 327 to 347 (FHLM…GSVI), 366 to 386 (IPFT…FPYL), 404 to 424 (YLAF…AYSL), 450 to 470 (WNLT…GYLT), 488 to 508 (SIKL…VVLY), and 520 to 540 (SPVG…NYII).

This sequence belongs to the complex I subunit 5 family.

The protein resides in the mitochondrion inner membrane. It catalyses the reaction a ubiquinone + NADH + 5 H(+)(in) = a ubiquinol + NAD(+) + 4 H(+)(out). In terms of biological role, core subunit of the mitochondrial membrane respiratory chain NADH dehydrogenase (Complex I) that is believed to belong to the minimal assembly required for catalysis. Complex I functions in the transfer of electrons from NADH to the respiratory chain. The immediate electron acceptor for the enzyme is believed to be ubiquinone. This is NADH-ubiquinone oxidoreductase chain 5 (ND5) from Metridium senile (Brown sea anemone).